Here is a 284-residue protein sequence, read N- to C-terminus: Putative ABC transporter ATP-binding protein MG468.1 homolog (284 aa).

Positions 53 to 284 constitute an ABC transporter domain; that stretch reads VLFKGVCKAV…PKTINEINWV (232 aa). An ATP-binding site is contributed by 89-96; sequence GKSGSGKT.

The protein belongs to the ABC transporter superfamily.

The polypeptide is Putative ABC transporter ATP-binding protein MG468.1 homolog (Mycoplasma pneumoniae (strain ATCC 29342 / M129 / Subtype 1) (Mycoplasmoides pneumoniae)).